A 453-amino-acid polypeptide reads, in one-letter code: Bifunctional protein GlmU (453 aa).

The segment at 1 to 226 (MSLNVVILAA…AMEVEGANNR (226 aa)) is pyrophosphorylase. Residues 8-11 (LAAG), lysine 22, glutamine 73, 78-79 (GT), 100-102 (YGD), glycine 137, glutamate 151, asparagine 166, and asparagine 224 contribute to the UDP-N-acetyl-alpha-D-glucosamine site. Aspartate 102 contacts Mg(2+). Asparagine 224 is a Mg(2+) binding site. Residues 227–247 (VQLAQLERSYQKMQAERLMIA) are linker. The interval 248–453 (GATLIDPARF…QNWARPVKKK (206 aa)) is N-acetyltransferase. UDP-N-acetyl-alpha-D-glucosamine contacts are provided by arginine 330 and lysine 348. Histidine 360 acts as the Proton acceptor in catalysis. Tyrosine 363 and asparagine 374 together coordinate UDP-N-acetyl-alpha-D-glucosamine. Acetyl-CoA-binding positions include alanine 377, 383-384 (NY), serine 402, alanine 420, and arginine 437.

It in the N-terminal section; belongs to the N-acetylglucosamine-1-phosphate uridyltransferase family. In the C-terminal section; belongs to the transferase hexapeptide repeat family. As to quaternary structure, homotrimer. Requires Mg(2+) as cofactor.

It localises to the cytoplasm. The enzyme catalyses alpha-D-glucosamine 1-phosphate + acetyl-CoA = N-acetyl-alpha-D-glucosamine 1-phosphate + CoA + H(+). It catalyses the reaction N-acetyl-alpha-D-glucosamine 1-phosphate + UTP + H(+) = UDP-N-acetyl-alpha-D-glucosamine + diphosphate. It participates in nucleotide-sugar biosynthesis; UDP-N-acetyl-alpha-D-glucosamine biosynthesis; N-acetyl-alpha-D-glucosamine 1-phosphate from alpha-D-glucosamine 6-phosphate (route II): step 2/2. Its pathway is nucleotide-sugar biosynthesis; UDP-N-acetyl-alpha-D-glucosamine biosynthesis; UDP-N-acetyl-alpha-D-glucosamine from N-acetyl-alpha-D-glucosamine 1-phosphate: step 1/1. It functions in the pathway bacterial outer membrane biogenesis; LPS lipid A biosynthesis. Functionally, catalyzes the last two sequential reactions in the de novo biosynthetic pathway for UDP-N-acetylglucosamine (UDP-GlcNAc). The C-terminal domain catalyzes the transfer of acetyl group from acetyl coenzyme A to glucosamine-1-phosphate (GlcN-1-P) to produce N-acetylglucosamine-1-phosphate (GlcNAc-1-P), which is converted into UDP-GlcNAc by the transfer of uridine 5-monophosphate (from uridine 5-triphosphate), a reaction catalyzed by the N-terminal domain. The chain is Bifunctional protein GlmU from Aeromonas hydrophila subsp. hydrophila (strain ATCC 7966 / DSM 30187 / BCRC 13018 / CCUG 14551 / JCM 1027 / KCTC 2358 / NCIMB 9240 / NCTC 8049).